The primary structure comprises 463 residues: Mitochondrial distribution and morphology protein 10 (463 aa).

Belongs to the MDM10 family. In terms of assembly, component of the ER-mitochondria encounter structure (ERMES) or MDM complex, composed of MMM1, MDM10, MDM12 and MDM34. Associates with the mitochondrial outer membrane sorting assembly machinery SAM(core) complex.

The protein resides in the mitochondrion outer membrane. Functionally, component of the ERMES/MDM complex, which serves as a molecular tether to connect the endoplasmic reticulum and mitochondria. Components of this complex are involved in the control of mitochondrial shape and protein biogenesis and may function in phospholipid exchange. MDM10 is involved in the late assembly steps of the general translocase of the mitochondrial outer membrane (TOM complex). Functions in the TOM40-specific route of the assembly of outer membrane beta-barrel proteins, including the association of TOM40 with the receptor TOM22 and small TOM proteins. Can associate with the SAM(core) complex as well as the MDM12-MMM1 complex, both involved in late steps of the major beta-barrel assembly pathway, that is responsible for biogenesis of all outer membrane beta-barrel proteins. May act as a switch that shuttles between both complexes and channels precursor proteins into the TOM40-specific pathway. Plays a role in mitochondrial morphology and in the inheritance of mitochondria. The sequence is that of Mitochondrial distribution and morphology protein 10 from Candida dubliniensis (strain CD36 / ATCC MYA-646 / CBS 7987 / NCPF 3949 / NRRL Y-17841) (Yeast).